The following is a 90-amino-acid chain: Early nodulin-36A (90 aa).

The chain is Early nodulin-36A from Glycine max (Soybean).